A 170-amino-acid chain; its full sequence is Macro domain-containing protein VPA0103 (170 aa).

The 170-residue stretch at 1-170 folds into the Macro domain; it reads MNAISLVQGD…SIWQHALTQH (170 aa).

Belongs to the MacroD-type family.

This is Macro domain-containing protein VPA0103 from Vibrio parahaemolyticus serotype O3:K6 (strain RIMD 2210633).